The following is a 712-amino-acid chain: Polyribonucleotide nucleotidyltransferase (712 aa).

2 residues coordinate Mg(2+): D487 and D493. The KH domain occupies P554–I613. The region spanning G623–K691 is the S1 motif domain.

The protein belongs to the polyribonucleotide nucleotidyltransferase family. It depends on Mg(2+) as a cofactor.

It is found in the cytoplasm. The enzyme catalyses RNA(n+1) + phosphate = RNA(n) + a ribonucleoside 5'-diphosphate. Involved in mRNA degradation. Catalyzes the phosphorolysis of single-stranded polyribonucleotides processively in the 3'- to 5'-direction. The sequence is that of Polyribonucleotide nucleotidyltransferase from Rhizobium johnstonii (strain DSM 114642 / LMG 32736 / 3841) (Rhizobium leguminosarum bv. viciae).